The primary structure comprises 76 residues: Small ribosomal subunit protein bS18 (76 aa).

It belongs to the bacterial ribosomal protein bS18 family. Part of the 30S ribosomal subunit. Forms a tight heterodimer with protein bS6.

In terms of biological role, binds as a heterodimer with protein bS6 to the central domain of the 16S rRNA, where it helps stabilize the platform of the 30S subunit. The polypeptide is Small ribosomal subunit protein bS18 (Xanthomonas euvesicatoria pv. vesicatoria (strain 85-10) (Xanthomonas campestris pv. vesicatoria)).